Reading from the N-terminus, the 469-residue chain is UDP-N-acetylmuramate--L-alanine ligase (469 aa).

Position 113–119 (113–119 (GTHGKTT)) interacts with ATP.

This sequence belongs to the MurCDEF family.

Its subcellular location is the cytoplasm. It catalyses the reaction UDP-N-acetyl-alpha-D-muramate + L-alanine + ATP = UDP-N-acetyl-alpha-D-muramoyl-L-alanine + ADP + phosphate + H(+). It participates in cell wall biogenesis; peptidoglycan biosynthesis. Functionally, cell wall formation. In Neisseria meningitidis serogroup A / serotype 4A (strain DSM 15465 / Z2491), this protein is UDP-N-acetylmuramate--L-alanine ligase.